A 234-amino-acid polypeptide reads, in one-letter code: Tissue factor pathway inhibitor 2 (234 aa).

The N-terminal stretch at 1–22 (MDSVRPLWLMLLSLLLVGTALG) is a signal peptide. 3 consecutive BPTI/Kunitz inhibitor domains span residues 36-86 (CLLP…NEAC), 96-146 (CRLK…MDFC), and 155-205 (CYSP…KRTC). Intrachain disulfides connect C36-C86, C45-C69, C61-C82, C96-C146, C105-C129, C121-C142, C155-C205, C164-C188, and C180-C201. N115 carries N-linked (GlcNAc...) asparagine glycosylation. N-linked (GlcNAc...) asparagine glycans are attached at residues N167 and N184.

In terms of assembly, finds in a complex with ABCB1, TFPI2 and PPP2R3C; leading to the dephosphorylation of ABCB1.

It is found in the secreted. May play a role in the regulation of plasmin-mediated matrix remodeling. Inhibits trypsin, plasmin, factor VIIa/tissue factor and weakly factor Xa. Has no effect on thrombin. The polypeptide is Tissue factor pathway inhibitor 2 (TFPI2) (Bos taurus (Bovine)).